A 509-amino-acid polypeptide reads, in one-letter code: Ceramide glucosyltransferase (509 aa).

The Lumenal portion of the chain corresponds to 1-42 (MIMQLGLTSLAFLALKCDAYNIAPKIDTPNVEPFAPSGGLKL). The chain crosses the membrane as a helical span at residues 43 to 63 (LAIVAIIWYVVVLLVAYYGFF). Residues 64–384 (EIMQKFSKRK…EATLLEPTTE (321 aa)) lie on the Cytoplasmic side of the membrane. Position 123 (aspartate 123) is a short sequence motif, D1. Position 179 (aspartate 179) is a short sequence motif, D2. Position 321 (aspartate 321) is a short sequence motif, D3. Aspartate 321 functions as the Proton acceptor in the catalytic mechanism. The (Q/R)XXRW motif lies at 361 to 365 (RRIRW). The helical transmembrane segment at 385-405 (CLLCGTFGTFAISTLFLQSYF) threads the bilayer. The Lumenal portion of the chain corresponds to 406–408 (NWK). Residues 409–429 (FFIFHLLVWMVTDYTQFHILL) traverse the membrane as a helical segment. Residues 430 to 466 (TNASQDTATCNVPYFAEPNFNAYGSPFESSNLRTFHR) lie on the Cytoplasmic side of the membrane. Residues 467-487 (WVLYWLLREVLALPIWISAML) traverse the membrane as a helical segment. The Lumenal segment spans residues 488-509 (GTRIIWRNRPFRINVDLSAEEL).

This sequence belongs to the glycosyltransferase 2 family.

It is found in the golgi apparatus membrane. The catalysed reaction is an N-acylsphing-4-enine + UDP-alpha-D-glucose = a beta-D-glucosyl-(1&lt;-&gt;1')-N-acylsphing-4-enine + UDP + H(+). It functions in the pathway lipid metabolism; sphingolipid metabolism. Functionally, catalyzes the final step in the biosynthesis of the membrane lipid glucosylceramide (GluCer), the transfer of glucose to ceramide. Glucosylceramides play important roles in growth, differentiation and pathogenicity. This is Ceramide glucosyltransferase from Komagataella phaffii (strain GS115 / ATCC 20864) (Yeast).